The sequence spans 445 residues: Tubulin beta-2A chain (445 aa).

The MREI motif motif lies at 1 to 4 (MREI). Residue Q11 coordinates GTP. S40 bears the Phosphoserine mark. An N6-acetyllysine; alternate modification is found at K58. Position 58 is an N6-succinyllysine; alternate (K58). A Glycyl lysine isopeptide (Lys-Gly) (interchain with G-Cter in ubiquitin); alternate cross-link involves residue K58. GTP contacts are provided by E69, S138, G142, T143, and G144. E69 serves as a coordination point for Mg(2+). S172 carries the phosphoserine; by CDK1 modification. GTP is bound by residues N204 and N226. Phosphothreonine is present on residues T285 and T290. R318 carries the omega-N-methylarginine modification. K324 is covalently cross-linked (Glycyl lysine isopeptide (Lys-Gly) (interchain with G-Cter in ubiquitin)). Residues 422 to 445 (YQQYQDATADEQGEFEEEEGEDEA) form a disordered region. A compositionally biased stretch (acidic residues) spans 429–445 (TADEQGEFEEEEGEDEA). At E438 the chain carries 5-glutamyl polyglutamate.

It belongs to the tubulin family. As to quaternary structure, interacts with ZNRF1. Part of a complex composed at least of ASH2L, EMSY, HCFC1, HSPA8, CCAR2, MATR3, MKI67, RBBP5, TUBB2A, WDR5 and ZNF335; this complex may have a histone H3-specific methyltransferase activity. Dimer of alpha and beta chains. A typical microtubule is a hollow water-filled tube with an outer diameter of 25 nm and an inner diameter of 15 nM. Alpha-beta heterodimers associate head-to-tail to form protofilaments running lengthwise along the microtubule wall with the beta-tubulin subunit facing the microtubule plus end conferring a structural polarity. Microtubules usually have 13 protofilaments but different protofilament numbers can be found in some organisms and specialized cells. Mg(2+) serves as cofactor. In terms of processing, some glutamate residues at the C-terminus are polyglutamylated, resulting in polyglutamate chains on the gamma-carboxyl group. Polyglutamylation plays a key role in microtubule severing by spastin (SPAST). SPAST preferentially recognizes and acts on microtubules decorated with short polyglutamate tails: severing activity by SPAST increases as the number of glutamates per tubulin rises from one to eight, but decreases beyond this glutamylation threshold. Glutamylation is also involved in cilia motility. Post-translationally, some glutamate residues at the C-terminus are monoglycylated but not polyglycylated due to the absence of functional TTLL10 in human. Monoglycylation is mainly limited to tubulin incorporated into cilia and flagella axonemes, which is required for their stability and maintenance. Flagella glycylation controls sperm motility. Both polyglutamylation and monoglycylation can coexist on the same protein on adjacent residues, and lowering glycylation levels increases polyglutamylation, and reciprocally. Phosphorylated on Ser-172 by CDK1 during the cell cycle, from metaphase to telophase, but not in interphase. This phosphorylation inhibits tubulin incorporation into microtubules. High expression in brain, where it represents 30% of all beta-tubulins.

It localises to the cytoplasm. The protein resides in the cytoskeleton. In terms of biological role, tubulin is the major constituent of microtubules, a cylinder consisting of laterally associated linear protofilaments composed of alpha- and beta-tubulin heterodimers. Microtubules grow by the addition of GTP-tubulin dimers to the microtubule end, where a stabilizing cap forms. Below the cap, tubulin dimers are in GDP-bound state, owing to GTPase activity of alpha-tubulin. This chain is Tubulin beta-2A chain (TUBB2A), found in Homo sapiens (Human).